The primary structure comprises 55 residues: Large ribosomal subunit protein bL33 (55 aa).

It belongs to the bacterial ribosomal protein bL33 family.

This chain is Large ribosomal subunit protein bL33, found in Rhodopseudomonas palustris (strain HaA2).